A 309-amino-acid polypeptide reads, in one-letter code: NmrA-like family domain-containing protein 1 (309 aa).

Residues 11-16 (GATGAQ), 37-41 (RNPEQ), 58-59 (DQ), 79-81 (TNY), lysine 102, lysine 143, and 165-168 (YFEN) contribute to the NADP(+) site. Positions 163-199 (PCYFENLLSYFLPQKAADGKSFLLDLPMGDVPMDGMS) are interaction with ASS1.

It belongs to the NmrA-type oxidoreductase family. In terms of assembly, homodimer. Interacts with ASS1. Interaction is enhanced by low NADPH/NADP(+) ratios, which results in inhibition of ASS1 activity.

It is found in the cytoplasm. The protein localises to the perinuclear region. Its subcellular location is the nucleus. Its function is as follows. Redox sensor protein. Undergoes restructuring and subcellular redistribution in response to changes in intracellular NADPH/NADP(+) levels. At low NADPH concentrations the protein is found mainly as a monomer, and binds argininosuccinate synthase (ASS1), the enzyme involved in nitric oxide synthesis. Association with ASS1 impairs its activity and reduces the production of nitric oxide, which subsecuently prevents apoptosis. Under normal NADPH concentrations, the protein is found as a dimer and hides the binding site for ASS1. The homodimer binds one molecule of NADPH. Has higher affinity for NADPH than for NADP(+). Binding to NADPH is necessary to form a stable dimer. This Mus musculus (Mouse) protein is NmrA-like family domain-containing protein 1 (Nmral1).